Consider the following 928-residue polypeptide: Dual serine/threonine and tyrosine protein kinase (928 aa).

Low complexity predominate over residues 1 to 14 (MEGDGVPWGSEPES). 2 disordered regions span residues 1-22 (MEGDGVPWGSEPESGPGPGGGG) and 55-81 (LRGSQPRGCPSSPAEGGEAGRGPAGDV). Positions 394-430 (RKKENELYESLMNIANRKQEEMKDMIVETLNTMKEEL) form a coiled coil. Positions 651-905 (PKLGQELGRG…PLLGIVQPML (255 aa)) constitute a Protein kinase domain. ATP is bound by residues 657-665 (LGRGQYGVV) and lysine 680. Catalysis depends on aspartate 776, which acts as the Proton acceptor.

Belongs to the protein kinase superfamily. Ser/Thr protein kinase family.

It is found in the cytoplasm. It localises to the cell membrane. The protein resides in the apical cell membrane. The protein localises to the basolateral cell membrane. Its subcellular location is the cell junction. The catalysed reaction is L-seryl-[protein] + ATP = O-phospho-L-seryl-[protein] + ADP + H(+). It carries out the reaction L-threonyl-[protein] + ATP = O-phospho-L-threonyl-[protein] + ADP + H(+). The enzyme catalyses L-tyrosyl-[protein] + ATP = O-phospho-L-tyrosyl-[protein] + ADP + H(+). In terms of biological role, acts as a positive regulator of ERK phosphorylation downstream of fibroblast growth factor-receptor activation. Involved in the regulation of both caspase-dependent apoptosis and caspase-independent cell death. In the skin, it plays a predominant role in suppressing caspase-dependent apoptosis in response to UV stress in a range of dermal cell types. The chain is Dual serine/threonine and tyrosine protein kinase (DSTYK) from Bos taurus (Bovine).